The chain runs to 473 residues: uncharacterized protein (473 aa).

An N-terminal signal peptide occupies residues 1–35; the sequence is MLWAHCGRFLRYHLLPLLLCRLPFLLFFQRPQWAH. 3 disordered regions span residues 142-201, 232-254, and 331-437; these read QRRR…RRRH, RGRL…GGAG, and IIPP…MTTN. A compositionally biased stretch (pro residues) spans 155–165; that stretch reads PSFPPPDPPSQ. Positions 168–182 are enriched in basic and acidic residues; that stretch reads EDARDADAERAESPH. Gly residues predominate over residues 243–254; that stretch reads PNTGGPRPGGAG. Over residues 341–397 the composition is skewed to basic and acidic residues; it reads QNEEPRQQLTGEETRNSTHTQREEVEDVSREGAREGNDGSRASGNDERRNNAGRYDD.

Belongs to the HHV-5 UL13 protein family. In terms of assembly, interacts with host MICOS complex subunits IMMT and CHCHD3.

Its subcellular location is the host mitochondrion. Functionally, plays an essential role during infection by modulating mitochondrial ultrastructure and thereby increasing bioenergetic potential. Mechanistically, alters cristae architecture by interacting with components of the host mitochondrial contact site and cristae organizing system (MICOS) complex. This is an uncharacterized protein from Human cytomegalovirus (strain Merlin) (HHV-5).